A 217-amino-acid polypeptide reads, in one-letter code: tRNA (guanine-N(7)-)-methyltransferase (217 aa).

4 residues coordinate S-adenosyl-L-methionine: Glu-44, Glu-69, Asp-96, and Asp-118. Asp-118 is a catalytic residue. Substrate contacts are provided by residues Lys-122, Asp-154, and 191 to 194 (TEYE).

It belongs to the class I-like SAM-binding methyltransferase superfamily. TrmB family.

The enzyme catalyses guanosine(46) in tRNA + S-adenosyl-L-methionine = N(7)-methylguanosine(46) in tRNA + S-adenosyl-L-homocysteine. Its pathway is tRNA modification; N(7)-methylguanine-tRNA biosynthesis. Its function is as follows. Catalyzes the formation of N(7)-methylguanine at position 46 (m7G46) in tRNA. This is tRNA (guanine-N(7)-)-methyltransferase from Bacillus anthracis (strain CDC 684 / NRRL 3495).